We begin with the raw amino-acid sequence, 271 residues long: Pyridoxine kinase (271 aa).

ATP is bound at residue N141. E144 serves as a coordination point for Mg(2+). Residues 178–182 (TGGGK), D190, I206, G215, and K240 each bind ATP.

This sequence belongs to the ThiD family. Homodimer.

It carries out the reaction pyridoxal + ATP = pyridoxal 5'-phosphate + ADP + H(+). Functionally, phosphorylates B6 vitamers; functions in a salvage pathway. Uses pyridoxal, pyridoxine, and pyridoxamine as substrates. Can also use hydroxymethylpyrimidine (HMP) as substrate. The protein is Pyridoxine kinase (pdxK) of Bacillus subtilis (strain 168).